The chain runs to 55 residues: Regulatory protein MokB (55 aa).

Overlapping regulatory peptide whose translation enables hokB expression. The sequence is that of Regulatory protein MokB (mokB) from Escherichia coli (strain K12).